A 360-amino-acid chain; its full sequence is Phospho-N-acetylmuramoyl-pentapeptide-transferase (360 aa).

Transmembrane regions (helical) follow at residues 26 to 46 (AILGLLTALVFSLWFGPKLIE), 74 to 94 (MGGLLILAAIFISVLLWGDLG), 97 to 117 (YVWVMLFVLGSFGLIGFIDDY), 134 to 154 (YILQSLAALLIAFFLYATAAN), 168 to 188 (VMPQLGAVFIVLAYFTIVGSS), 199 to 219 (GLAIMPTVMVAAAFALIAYLS), 236 to 256 (SGELVIVCTAIVGAGLGFLWF), 263 to 283 (VFMGDVGSLSLGAALGTIAVL), 288 to 308 (ILLVIMGGVFVMETLSVILQV), and 338 to 358 (VIVRFWIISIFLVLLGLATLK).

This sequence belongs to the glycosyltransferase 4 family. MraY subfamily. It depends on Mg(2+) as a cofactor.

It localises to the cell inner membrane. It carries out the reaction UDP-N-acetyl-alpha-D-muramoyl-L-alanyl-gamma-D-glutamyl-meso-2,6-diaminopimeloyl-D-alanyl-D-alanine + di-trans,octa-cis-undecaprenyl phosphate = di-trans,octa-cis-undecaprenyl diphospho-N-acetyl-alpha-D-muramoyl-L-alanyl-D-glutamyl-meso-2,6-diaminopimeloyl-D-alanyl-D-alanine + UMP. It participates in cell wall biogenesis; peptidoglycan biosynthesis. In terms of biological role, catalyzes the initial step of the lipid cycle reactions in the biosynthesis of the cell wall peptidoglycan: transfers peptidoglycan precursor phospho-MurNAc-pentapeptide from UDP-MurNAc-pentapeptide onto the lipid carrier undecaprenyl phosphate, yielding undecaprenyl-pyrophosphoryl-MurNAc-pentapeptide, known as lipid I. The protein is Phospho-N-acetylmuramoyl-pentapeptide-transferase of Shewanella baltica (strain OS195).